The chain runs to 88 residues: DNA-directed RNA polymerase subunit omega (88 aa).

This sequence belongs to the RNA polymerase subunit omega family. The RNAP catalytic core consists of 2 alpha, 1 beta, 1 beta' and 1 omega subunit. When a sigma factor is associated with the core the holoenzyme is formed, which can initiate transcription.

The catalysed reaction is RNA(n) + a ribonucleoside 5'-triphosphate = RNA(n+1) + diphosphate. Functionally, promotes RNA polymerase assembly. Latches the N- and C-terminal regions of the beta' subunit thereby facilitating its interaction with the beta and alpha subunits. This Salinispora arenicola (strain CNS-205) protein is DNA-directed RNA polymerase subunit omega.